Reading from the N-terminus, the 167-residue chain is Probable chorismate pyruvate-lyase (167 aa).

The substrate site is built by Arg-71, Ile-110, and Glu-150.

It belongs to the UbiC family.

The protein resides in the cytoplasm. The enzyme catalyses chorismate = 4-hydroxybenzoate + pyruvate. Its pathway is cofactor biosynthesis; ubiquinone biosynthesis. In terms of biological role, removes the pyruvyl group from chorismate, with concomitant aromatization of the ring, to provide 4-hydroxybenzoate (4HB) for the ubiquinone pathway. This chain is Probable chorismate pyruvate-lyase, found in Acinetobacter baylyi (strain ATCC 33305 / BD413 / ADP1).